A 193-amino-acid polypeptide reads, in one-letter code: Ion-translocating oxidoreductase complex subunit A (193 aa).

Transmembrane regions (helical) follow at residues 5-25, 39-59, 63-83, 102-122, 134-154, and 171-191; these read LLLFVGTVLVNNFVLVKFLGL, MGMGLATTFVMTLASICAWLI, ILIPLNLIYLRTLAFILVIAV, LLGIFLPLITTNCAVLGVALL, ALYGFSAAVGFSLVMVLFAAI, and AIALITAGLMSLAFMGFSGLV.

It belongs to the NqrDE/RnfAE family. As to quaternary structure, the complex is composed of six subunits: RsxA, RsxB, RsxC, RsxD, RsxE and RsxG.

It localises to the cell inner membrane. Part of a membrane-bound complex that couples electron transfer with translocation of ions across the membrane. Required to maintain the reduced state of SoxR. In Escherichia fergusonii (strain ATCC 35469 / DSM 13698 / CCUG 18766 / IAM 14443 / JCM 21226 / LMG 7866 / NBRC 102419 / NCTC 12128 / CDC 0568-73), this protein is Ion-translocating oxidoreductase complex subunit A.